Here is a 454-residue protein sequence, read N- to C-terminus: Cobyrinate a,c-diamide synthase (454 aa).

A GATase cobBQ-type domain is found at 247–442 (KIGIAMDSAF…IHAHWASNPN (196 aa)). Cys329 functions as the Nucleophile in the catalytic mechanism.

This sequence belongs to the CobB/CbiA family. Mg(2+) is required as a cofactor.

The enzyme catalyses cob(II)yrinate + 2 L-glutamine + 2 ATP + 2 H2O = cob(II)yrinate a,c diamide + 2 L-glutamate + 2 ADP + 2 phosphate + 2 H(+). It participates in cofactor biosynthesis; adenosylcobalamin biosynthesis; cob(II)yrinate a,c-diamide from sirohydrochlorin (anaerobic route): step 10/10. Catalyzes the ATP-dependent amidation of the two carboxylate groups at positions a and c of cobyrinate, using either L-glutamine or ammonia as the nitrogen source. This chain is Cobyrinate a,c-diamide synthase, found in Leptospira interrogans serogroup Icterohaemorrhagiae serovar Lai (strain 56601).